The primary structure comprises 225 residues: Uracil-DNA glycosylase (225 aa).

The active-site Proton acceptor is the Asp-65.

It belongs to the uracil-DNA glycosylase (UDG) superfamily. UNG family.

The protein localises to the cytoplasm. The enzyme catalyses Hydrolyzes single-stranded DNA or mismatched double-stranded DNA and polynucleotides, releasing free uracil.. Its function is as follows. Excises uracil residues from the DNA which can arise as a result of misincorporation of dUMP residues by DNA polymerase or due to deamination of cytosine. The protein is Uracil-DNA glycosylase of Alkaliphilus oremlandii (strain OhILAs) (Clostridium oremlandii (strain OhILAs)).